We begin with the raw amino-acid sequence, 689 residues long: Glycine--tRNA ligase beta subunit (689 aa).

The protein belongs to the class-II aminoacyl-tRNA synthetase family. Tetramer of two alpha and two beta subunits.

The protein resides in the cytoplasm. The catalysed reaction is tRNA(Gly) + glycine + ATP = glycyl-tRNA(Gly) + AMP + diphosphate. The sequence is that of Glycine--tRNA ligase beta subunit from Lacticaseibacillus casei (strain BL23) (Lactobacillus casei).